A 210-amino-acid chain; its full sequence is dTTP/UTP pyrophosphatase (210 aa).

The active-site Proton acceptor is Asp-80.

Belongs to the Maf family. YhdE subfamily. A divalent metal cation serves as cofactor.

Its subcellular location is the cytoplasm. The enzyme catalyses dTTP + H2O = dTMP + diphosphate + H(+). It carries out the reaction UTP + H2O = UMP + diphosphate + H(+). Its function is as follows. Nucleoside triphosphate pyrophosphatase that hydrolyzes dTTP and UTP. May have a dual role in cell division arrest and in preventing the incorporation of modified nucleotides into cellular nucleic acids. This chain is dTTP/UTP pyrophosphatase, found in Nitratidesulfovibrio vulgaris (strain ATCC 29579 / DSM 644 / CCUG 34227 / NCIMB 8303 / VKM B-1760 / Hildenborough) (Desulfovibrio vulgaris).